Here is a 307-residue protein sequence, read N- to C-terminus: Ribosomal RNA small subunit methyltransferase H (307 aa).

S-adenosyl-L-methionine is bound by residues 32–34 (GGH), Asp-52, Phe-78, Asp-99, and Gln-106.

Belongs to the methyltransferase superfamily. RsmH family.

The protein localises to the cytoplasm. The enzyme catalyses cytidine(1402) in 16S rRNA + S-adenosyl-L-methionine = N(4)-methylcytidine(1402) in 16S rRNA + S-adenosyl-L-homocysteine + H(+). Specifically methylates the N4 position of cytidine in position 1402 (C1402) of 16S rRNA. The chain is Ribosomal RNA small subunit methyltransferase H from Acinetobacter baumannii (strain AB0057).